The following is a 254-amino-acid chain: Type III pantothenate kinase (254 aa).

7–14 (DIGNTRLK) serves as a coordination point for ATP. Substrate-binding positions include Tyr-97 and 104 to 107 (GSDR). Catalysis depends on Asp-106, which acts as the Proton acceptor. An ATP-binding site is contributed by Thr-134. Residue Thr-184 coordinates substrate.

This sequence belongs to the type III pantothenate kinase family. Homodimer. The cofactor is NH4(+). K(+) is required as a cofactor.

The protein localises to the cytoplasm. It carries out the reaction (R)-pantothenate + ATP = (R)-4'-phosphopantothenate + ADP + H(+). It participates in cofactor biosynthesis; coenzyme A biosynthesis; CoA from (R)-pantothenate: step 1/5. Its function is as follows. Catalyzes the phosphorylation of pantothenate (Pan), the first step in CoA biosynthesis. The sequence is that of Type III pantothenate kinase from Methylibium petroleiphilum (strain ATCC BAA-1232 / LMG 22953 / PM1).